The primary structure comprises 444 residues: MKSQSKRTSRLFVFVGVVVAIIIAVLSWRYFGTGSDNNTSGAQQSARGQDTSHGGRRNTPLAPVQAATATEQEVPRYLTGLGTVIAANTVTVTSRVDGELMALHFTEGQQVKAGDLLAEIDPRPYEVQLTQAQGQLAKDQATLDNARRDLARYQKLSKTGLISQQELDTQSSLVRQSEGSVKADQGAIDSAKLQLTYSRITAPISGRVGLKQVDVGNYITSGTATPIVVITQTHPVDVVFTLPESDIPAIIQAQKNAEKTHAIVPVEAWDRTNKQMLAQGYLLSIDNQIDTTTGTIKLKARFNNEDDVLFPNQFVNARIKVDLLQNAVVVPTAAVQMGSEGNFVWTLDDANKVSKHLVTTGIQNSQQVVIDAGLNAGQRVVTDGIDRLTEGVQVEVVTPRSANTDANPASAEKAAAEAEGSTPHQGRGRPANAPARSTTAAEKS.

Positions 1-20 (MKSQSKRTSRLFVFVGVVVA) are cleaved as a signal peptide. The segment covering 37-52 (NNTSGAQQSARGQDTS) has biased composition (polar residues). Disordered regions lie at residues 37–60 (NNTS…RNTP) and 398–444 (TPRS…AEKS). Over residues 406–419 (ANPASAEKAAAEAE) the composition is skewed to low complexity. A compositionally biased stretch (polar residues) spans 435–444 (ARSTTAAEKS).

Belongs to the membrane fusion protein (MFP) (TC 8.A.1) family. Part of a tripartite efflux system composed of MdtA, MdtB and MdtC.

It localises to the cell inner membrane. The polypeptide is Multidrug resistance protein MdtA (Yersinia pestis bv. Antiqua (strain Antiqua)).